The following is a 199-amino-acid chain: dITP/XTP pyrophosphatase (199 aa).

A substrate-binding site is contributed by 8–13 (TSNINK). The Proton acceptor role is filled by D68. D68 is a Mg(2+) binding site. Residues S69, 155-158 (FGYD), K177, and 182-183 (HR) contribute to the substrate site.

This sequence belongs to the HAM1 NTPase family. Homodimer. Mg(2+) is required as a cofactor.

It catalyses the reaction XTP + H2O = XMP + diphosphate + H(+). It carries out the reaction dITP + H2O = dIMP + diphosphate + H(+). The catalysed reaction is ITP + H2O = IMP + diphosphate + H(+). Functionally, pyrophosphatase that catalyzes the hydrolysis of nucleoside triphosphates to their monophosphate derivatives, with a high preference for the non-canonical purine nucleotides XTP (xanthosine triphosphate), dITP (deoxyinosine triphosphate) and ITP. Seems to function as a house-cleaning enzyme that removes non-canonical purine nucleotides from the nucleotide pool, thus preventing their incorporation into DNA/RNA and avoiding chromosomal lesions. This chain is dITP/XTP pyrophosphatase, found in Borrelia duttonii (strain Ly).